Here is a 282-residue protein sequence, read N- to C-terminus: Undecaprenyl-diphosphatase (282 aa).

The next 7 helical transmembrane spans lie at 40 to 60 (GAAFTAIVQIGTLIAVLIYFF), 85 to 105 (AKMGWMIAAGTIPIVVFGLLF), 117 to 137 (YWISAALITLAIILSLAEWLI), 158 to 178 (ALIIGLVQSIALIPGSSRSGV), 193 to 213 (AARFSFLLSLPAVFAAGIYQL), 231 to 251 (IVATLVAGIVGYASIAFLITF), and 258 to 278 (AVFIIYRIALGLTILALIATG).

This sequence belongs to the UppP family.

It localises to the cell inner membrane. It carries out the reaction di-trans,octa-cis-undecaprenyl diphosphate + H2O = di-trans,octa-cis-undecaprenyl phosphate + phosphate + H(+). In terms of biological role, catalyzes the dephosphorylation of undecaprenyl diphosphate (UPP). Confers resistance to bacitracin. This Prosthecochloris aestuarii (strain DSM 271 / SK 413) protein is Undecaprenyl-diphosphatase.